The chain runs to 739 residues: Prestin (739 aa).

The Cytoplasmic segment spans residues 1-76; sequence MEHVTVSEEP…PILTWLPSYP (76 aa). Residues 77–106 form a helical membrane-spanning segment; sequence LKEYLFGDIVSGISTGVMQLPQGLAYAMLA. Over 107-109 the chain is Extracellular; sequence AVP. Residues 110 to 127 traverse the membrane as a helical segment; the sequence is PVFGLYSSFYPVLLYTFF. Over 128-138 the chain is Cytoplasmic; that stretch reads GTSKHISIGTF. A helical membrane pass occupies residues 139–152; the sequence is AVISLMIGGVAVRE. At 153–169 the chain is on the extracellular side; that stretch reads APDSMFMVNGTNSSLVV. N-linked (GlcNAc...) asparagine glycosylation is found at N161 and N164. A helical membrane pass occupies residues 170 to 199; that stretch reads NIEARDSRRVEVVVALTTLVGIIQFVLGLL. Residues 200-209 lie on the Cytoplasmic side of the membrane; sequence RFGFLAIYLT. Residues 210-233 form a helical membrane-spanning segment; it reads EPLVRGFTTAAAVHVSVSQLKYLL. The Extracellular segment spans residues 234–244; it reads GVKTARFNGPL. An intramembrane region (helical) is located at residues 245-256; the sequence is SVVYSLDAVLRN. Topologically, residues 257–261 are extracellular; the sequence is IADTN. The chain crosses the membrane as a helical span at residues 262–285; it reads IVTLIIGLGCTVFLYIIKQLNERF. Topologically, residues 286-294 are cytoplasmic; sequence KKKLLIPIP. A helical membrane pass occupies residues 295-310; sequence GEIIVVIVSTGISYGM. The Extracellular segment spans residues 311-335; it reads LMSENYGVDVVGKIPTGLLPPKVPD. The chain crosses the membrane as a helical span at residues 336–370; it reads FSVFPNLFADAVPIAVVGFSITISLAKTFALKYGY. Residues 371-373 are Cytoplasmic-facing; that stretch reads SVD. Residues 374–391 traverse the membrane as a helical segment; that stretch reads GNQELIALGLCNFVSSFF. Topologically, residues 392–399 are extracellular; that stretch reads HTFVVTAS. The chain crosses the membrane as a helical span at residues 400-409; that stretch reads MSRSLVQEST. A salicylate-binding site is contributed by S401. At 410–413 the chain is on the cytoplasmic side; sequence GGHT. Residues 414-435 traverse the membrane as a helical segment; it reads EIAGLLASLLVLLVVVAIGFVF. The Extracellular portion of the chain corresponds to 436–439; it reads QPLP. A helical transmembrane segment spans residues 440–467; sequence TTVLAAIIMVNLLGMFKQTRDIPVLWRK. A topological domain (cytoplasmic) is located at residue S468. Residues 469-484 traverse the membrane as a helical segment; sequence KIELAIWLVSFFASVL. The Extracellular portion of the chain corresponds to 485–486; sequence LG. The chain crosses the membrane as a helical span at residues 487-507; the sequence is LDYGLAVAMAFAILTVIYRTQ. Positions 508 to 731 are extended region for STAS domain; that stretch reads RPKNVVLGQI…AVLQCKRWRD (224 aa). The Cytoplasmic portion of the chain corresponds to 508–739; the sequence is RPKNVVLGQI…RDLPVHPNIH (232 aa). The region spanning 528-726 is the STAS domain; the sequence is EYEEAEECSG…PTIHDAVLQC (199 aa).

The protein belongs to the SLC26A/SulP transporter (TC 2.A.53) family. Homodimer. Interacts (via STAS domain) with CALM; this interaction is calcium-dependent. In terms of tissue distribution, expressed in hair cells of the auditory organs.

It localises to the cell membrane. The catalysed reaction is oxalate(in) + chloride(out) = oxalate(out) + chloride(in). It carries out the reaction sulfate(out) + chloride(in) = sulfate(in) + chloride(out). With respect to regulation, sulfate/chloride antiport activity is inhibited by salicylate; this inhibition is reversible. Its function is as follows. Electrogenic antiporter that exchanges sulfate or oxalate for chloride ion in a strictly coupled manner with a 1:1 stoichiometry. Adopts a dynamic conformation, which alternates between the exposure of the central binding site to the extra- and intracellular solutions leading to an inward-to-outward conformational transition during the transport cycle. Generates voltage-dependent charge movements resembling to the non-linear capacitance (NLC) of the cell membrane, but which are not associated to electromotile activity. This chain is Prestin, found in Danio rerio (Zebrafish).